Reading from the N-terminus, the 165-residue chain is Protein C2-DOMAIN ABA-RELATED 8 (165 aa).

Methionine 1 carries the N-acetylmethionine modification. The 106-residue stretch at 1–106 (MENLVGLLRI…QGTDIQELTN (106 aa)) folds into the C2 domain. Residues arginine 21, aspartate 22, aspartate 27, aspartate 73, lysine 74, aspartate 75, and aspartate 81 each contribute to the Ca(2+) site.

It belongs to the plant CAR protein family. Binds to PYR/PYL/RCAR abscisic acid intracellular receptors in an ABA-independent manner, both at the plasma membrane and in the nucleus.

The protein resides in the cell membrane. It is found in the nucleus. In terms of biological role, stimulates the GTPase/ATPase activities of Obg-like ATPases. Mediates the transient calcium-dependent interaction of PYR/PYL/RCAR abscisic acid (ABA) receptors with the plasma membrane and thus regulates ABA sensitivity. This Arabidopsis thaliana (Mouse-ear cress) protein is Protein C2-DOMAIN ABA-RELATED 8.